The following is a 502-amino-acid chain: 2-isopropylmalate synthase (502 aa).

Mn(2+)-binding residues include Asp1, His189, His191, and Asn225. The Pyruvate carboxyltransferase domain occupies 1–254 (DGEQALQASL…STNINHKEIY (254 aa)). Residues 379–502 (CLKFFSVQSI…VNKNLKNLKK (124 aa)) are regulatory domain.

This sequence belongs to the alpha-IPM synthase/homocitrate synthase family. LeuA type 1 subfamily. In terms of assembly, homodimer. The cofactor is Mn(2+).

Its subcellular location is the cytoplasm. It carries out the reaction 3-methyl-2-oxobutanoate + acetyl-CoA + H2O = (2S)-2-isopropylmalate + CoA + H(+). The protein operates within amino-acid biosynthesis; L-leucine biosynthesis; L-leucine from 3-methyl-2-oxobutanoate: step 1/4. Its function is as follows. Catalyzes the condensation of the acetyl group of acetyl-CoA with 3-methyl-2-oxobutanoate (2-ketoisovalerate) to form 3-carboxy-3-hydroxy-4-methylpentanoate (2-isopropylmalate). The polypeptide is 2-isopropylmalate synthase (Buchnera aphidicola subsp. Uroleucon sonchi).